We begin with the raw amino-acid sequence, 502 residues long: Acetyl-coenzyme A carboxylase carboxyl transferase subunit beta, chloroplastic (502 aa).

Residues G191–S202 are compositionally biased toward low complexity. Positions G191–E212 are disordered. The region spanning L226–S497 is the CoA carboxyltransferase N-terminal domain. Zn(2+) contacts are provided by C230, C233, C249, and C252. The C4-type zinc finger occupies C230–C252.

This sequence belongs to the AccD/PCCB family. Acetyl-CoA carboxylase is a heterohexamer composed of biotin carboxyl carrier protein, biotin carboxylase and 2 subunits each of ACCase subunit alpha and ACCase plastid-coded subunit beta (accD). Zn(2+) serves as cofactor.

The protein localises to the plastid. The protein resides in the chloroplast stroma. It carries out the reaction N(6)-carboxybiotinyl-L-lysyl-[protein] + acetyl-CoA = N(6)-biotinyl-L-lysyl-[protein] + malonyl-CoA. The protein operates within lipid metabolism; malonyl-CoA biosynthesis; malonyl-CoA from acetyl-CoA: step 1/1. In terms of biological role, component of the acetyl coenzyme A carboxylase (ACC) complex. Biotin carboxylase (BC) catalyzes the carboxylation of biotin on its carrier protein (BCCP) and then the CO(2) group is transferred by the transcarboxylase to acetyl-CoA to form malonyl-CoA. In Chloranthus spicatus (Chulantree), this protein is Acetyl-coenzyme A carboxylase carboxyl transferase subunit beta, chloroplastic.